The chain runs to 717 residues: UvrABC system protein C (717 aa).

The GIY-YIG domain occupies 16-95; sequence DAPGVYRFHD…IKEYDPRFNV (80 aa). A UVR domain is found at 208 to 243; that stretch reads DTLIRKLDREMRQASEELEFERAARLRDDLEALRRA. Disordered stretches follow at residues 517–555 and 696–717; these read TAAG…GRPR and HAAL…GESQ. Basic and acidic residues-rich tracts occupy residues 541–553 and 707–717; these read EAER…ETGR and ESRDNAEGESQ.

This sequence belongs to the UvrC family. As to quaternary structure, interacts with UvrB in an incision complex.

The protein resides in the cytoplasm. In terms of biological role, the UvrABC repair system catalyzes the recognition and processing of DNA lesions. UvrC both incises the 5' and 3' sides of the lesion. The N-terminal half is responsible for the 3' incision and the C-terminal half is responsible for the 5' incision. The polypeptide is UvrABC system protein C (Saccharopolyspora erythraea (strain ATCC 11635 / DSM 40517 / JCM 4748 / NBRC 13426 / NCIMB 8594 / NRRL 2338)).